Here is a 130-residue protein sequence, read N- to C-terminus: Small ribosomal subunit protein uS12c (130 aa).

The protein belongs to the universal ribosomal protein uS12 family. In terms of assembly, part of the 30S ribosomal subunit.

Its subcellular location is the plastid. The protein resides in the chloroplast. With S4 and S5 plays an important role in translational accuracy. Located at the interface of the 30S and 50S subunits. This is Small ribosomal subunit protein uS12c (rps12) from Tetradesmus obliquus (Green alga).